The following is a 163-amino-acid chain: Thiol peroxidase (163 aa).

One can recognise a Thioredoxin domain in the interval 16–162; that stretch reads LQVGDKALDF…FEAAIAAAKA (147 aa). C58 serves as the catalytic Cysteine sulfenic acid (-SOH) intermediate. C58 and C92 are disulfide-bonded.

The protein belongs to the peroxiredoxin family. Tpx subfamily. Homodimer.

The catalysed reaction is a hydroperoxide + [thioredoxin]-dithiol = an alcohol + [thioredoxin]-disulfide + H2O. Functionally, thiol-specific peroxidase that catalyzes the reduction of hydrogen peroxide and organic hydroperoxides to water and alcohols, respectively. Plays a role in cell protection against oxidative stress by detoxifying peroxides. This is Thiol peroxidase from Streptococcus pneumoniae serotype 2 (strain D39 / NCTC 7466).